Here is a 117-residue protein sequence, read N- to C-terminus: Hydrogenase maturation factor HypA (117 aa).

His-2 is a binding site for Ni(2+). Zn(2+)-binding residues include Cys-73, Cys-76, Cys-89, and Cys-92.

The protein belongs to the HypA/HybF family.

Functionally, involved in the maturation of [NiFe] hydrogenases. Required for nickel insertion into the metal center of the hydrogenase. This chain is Hydrogenase maturation factor HypA, found in Shewanella baltica (strain OS195).